The sequence spans 1282 residues: Crescerin-like protein che-12 (1282 aa).

2 TOG regions span residues 33–240 (DFDT…EHTE) and 268–515 (PSLV…MDSF). HEAT repeat units lie at residues 59–96 (QKKGELFKCIDKIICDDRWELQHQCIKFLVEAMPTFGS), 100–137 (YCMCFVMPNLIPKLVSNKVTVRKITHQAIATFLRLKPE), 162–209 (ELHH…FIGN), 261–300 (RLRFGIVPSLVCALIAEDTDANQRISGLEKMKQVVDQITP), 308–345 (PHLHSYLLMLSNVLEDLNFKVVVLALDIVRATGHHLKG), 349–386 (AHIQQFVNLVAKHFGNQKSVIKQIIMMTFMELFQNINP), 388–421 (TVGGCLRVFLENKNSRVREEVINIYTASLMTISP), and 424–461 (FNLQPLVNILVPMFHDVKKRVRLAAFEQLSVLAYLLNG). A disordered region spans residues 566-714 (IQQQGQAEKP…RSFDDRPAKA (149 aa)). Low complexity-rich tracts occupy residues 575–592 (PSFSLPQQPAQQASHQAQ) and 633–644 (SAASNPNSSTSS). Residues 702–712 (DPPRSFDDRPA) show a composition bias toward basic and acidic residues. 2 TOG regions span residues 800–1022 (NMSV…ANVE) and 1066–1282 (TELL…ALIR). HEAT repeat units follow at residues 838–875 (DNLKEVIIAILNECKNLRSSVSRVAIVTIGTVAQNLNS), 879–917 (SEMEKICAVLLSKSGDVSNAFIRDDATDSLNKLVKAATA), 919–953 (KALQGIILAGAKSKNNTIRSSCANFVYDIITIQGS), 961–998 (NALSNVLPVLLQFSRDQSPQVRNPGKQSLCFLSKDPNF), 1095–1132 (ASDTRLIEAFISRLGDTNGKVASCAMETYISTMGSMAK), 1177–1214 (IEPVSLLPAMTSATKKSNVKQRPFILTQYCELSKLAYK), and 1219–1258 (QVEVMALPLLWDSVKNSAPDVDNKKATQYLAKTLAKLIGE).

Belongs to the Crescerin family. In terms of tissue distribution, detected in a subset of amphid neurons that lack wing- or finger-like ciliary extensions. Likewise, detected in phasmid neurons.

Its subcellular location is the cell projection. The protein resides in the cilium. It localises to the perikaryon. The protein localises to the dendrite. Functionally, required for normal structure and function of sensory cilia on amphid neurons, especially for the formation of distal ciliary structures, but is less important for normal assembly of middle and basal ciliary structures. Plays a role in the organization of axoneme microtubule bundles in sensory cilia. Required for normal structure and function of the ASER neuron that mediates attraction to NaCl. Required for normal chemotaxis to NaCl. Required for normal avoidance response to high osmolarity. In contrast, is not required for normal chemotaxis to isoamyl alcohol. Does not play a role in intraflagella transport (IFT). Promotes dauer formation in response to pheromones such as the ascarosides ascr#2, ascr#3, ascr#5, ascr#8 and icas#9. This Caenorhabditis elegans protein is Crescerin-like protein che-12.